The chain runs to 267 residues: Small ribosomal subunit protein uS2 (267 aa).

The tract at residues 224-267 (GRQGEDQVDEKTFEGQKSEAAEGDKKTADNSMEDIVNAVEGDNK) is disordered. Residues 225 to 251 (RQGEDQVDEKTFEGQKSEAAEGDKKTA) show a composition bias toward basic and acidic residues.

The protein belongs to the universal ribosomal protein uS2 family.

In Levilactobacillus brevis (strain ATCC 367 / BCRC 12310 / CIP 105137 / JCM 1170 / LMG 11437 / NCIMB 947 / NCTC 947) (Lactobacillus brevis), this protein is Small ribosomal subunit protein uS2.